A 658-amino-acid chain; its full sequence is Integrator complex subunit 9 (658 aa).

Lys2 and Phe19 together coordinate 1D-myo-inositol hexakisphosphate. Residue Lys58 forms a Glycyl lysine isopeptide (Lys-Gly) (interchain with G-Cter in SUMO2) linkage. 1D-myo-inositol hexakisphosphate contacts are provided by Lys510 and Arg511. The disordered stretch occupies residues 548–574 (DNKHLLQPPPRPAQPTSGKKRKRVSDD). A Nuclear localization signal motif is present at residues 566 to 570 (KKRKR).

The protein belongs to the metallo-beta-lactamase superfamily. RNA-metabolizing metallo-beta-lactamase-like family. INTS9 subfamily. In terms of assembly, component of the Integrator complex, composed of core subunits INTS1, INTS2, INTS3, INTS4, INTS5, INTS6, INTS7, INTS8, INTS9/RC74, INTS10, INTS11/CPSF3L, INTS12, INTS13, INTS14 and INTS15. The core complex associates with protein phosphatase 2A subunits PPP2CA and PPP2R1A, to form the Integrator-PP2A (INTAC) complex. INTS9 is part of the RNA endonuclease subcomplex, composed of INTS4, INTS9, INTS11 and inositol hexakisphosphate (InsP6). Interacts with WDR73; interaction is required for the assembly of the RNA endonuclease subcomplex in the cytoplasm. Interacts with BRAT1; interaction is required for the assembly of the RNA endonuclease subcomplex. Interacts with ESRRB, ESRRB is not a core component of the Integrator complex and this association is a bridge for the interaction with the multiprotein complex Integrator; attracts the transcriptional machinery.

It localises to the nucleus. The protein resides in the cytoplasm. In terms of biological role, component of the integrator complex, a multiprotein complex that terminates RNA polymerase II (Pol II) transcription in the promoter-proximal region of genes. The integrator complex provides a quality checkpoint during transcription elongation by driving premature transcription termination of transcripts that are unfavorably configured for transcriptional elongation: the complex terminates transcription by (1) catalyzing dephosphorylation of the C-terminal domain (CTD) of Pol II subunit POLR2A/RPB1 and SUPT5H/SPT5, (2) degrading the exiting nascent RNA transcript via endonuclease activity and (3) promoting the release of Pol II from bound DNA. The integrator complex is also involved in terminating the synthesis of non-coding Pol II transcripts, such as enhancer RNAs (eRNAs), small nuclear RNAs (snRNAs), telomerase RNAs and long non-coding RNAs (lncRNAs). Mediates recruitment of cytoplasmic dynein to the nuclear envelope, probably as component of the integrator complex. This Homo sapiens (Human) protein is Integrator complex subunit 9.